A 393-amino-acid chain; its full sequence is MVKVNGFSFVARSAGIRKSGKPDLGLIFSTVPARCAGVFTTNKVQAAPVLVTAPRIAAGECQAVLVNSGNANACTGEVGMQDALRCGQLAAKSLGIDEQLVAVSSTGVIGHPLPMPLLEKTIPGMSEGLSETAVDDVANAMMTTDSFAKVASRQAGDSAPYTILGVAKGAGMIHPNMATMLSFVMTDACVDQHFLQQALRQAVEGSFNIITVDRDTSTNDMVLVLANGESKTPEIVADSAEGQEFAELLRGVLLDLAKMIVRDGEGATKLVHVCVNGAADDGDARKVAYNVATSNLVKTAFFGEDANWGRIIAAVGYSEAQVDPSRIAIFFDGVPVVQKGLGTGPELEAQATDVLKQAEFSVTIDLGLGDGRGEYYTSDLTYEYVKINADYRT.

Substrate-binding residues include threonine 143, lysine 168, threonine 179, glutamate 265, asparagine 388, and threonine 393. Threonine 179 functions as the Nucleophile in the catalytic mechanism.

This sequence belongs to the ArgJ family. Heterotetramer of two alpha and two beta chains.

The protein resides in the cytoplasm. The enzyme catalyses N(2)-acetyl-L-ornithine + L-glutamate = N-acetyl-L-glutamate + L-ornithine. It carries out the reaction L-glutamate + acetyl-CoA = N-acetyl-L-glutamate + CoA + H(+). It participates in amino-acid biosynthesis; L-arginine biosynthesis; L-ornithine and N-acetyl-L-glutamate from L-glutamate and N(2)-acetyl-L-ornithine (cyclic): step 1/1. It functions in the pathway amino-acid biosynthesis; L-arginine biosynthesis; N(2)-acetyl-L-ornithine from L-glutamate: step 1/4. In terms of biological role, catalyzes two activities which are involved in the cyclic version of arginine biosynthesis: the synthesis of N-acetylglutamate from glutamate and acetyl-CoA as the acetyl donor, and of ornithine by transacetylation between N(2)-acetylornithine and glutamate. In Syntrophotalea carbinolica (strain DSM 2380 / NBRC 103641 / GraBd1) (Pelobacter carbinolicus), this protein is Arginine biosynthesis bifunctional protein ArgJ.